Here is an 87-residue protein sequence, read N- to C-terminus: Small ribosomal subunit protein bS20 (87 aa).

The interval 1–22 (MANTSQARKRARQAGVRRVRNA) is disordered. Positions 7–20 (ARKRARQAGVRRVR) are enriched in basic residues.

The protein belongs to the bacterial ribosomal protein bS20 family.

Its function is as follows. Binds directly to 16S ribosomal RNA. The protein is Small ribosomal subunit protein bS20 of Nitrosococcus oceani (strain ATCC 19707 / BCRC 17464 / JCM 30415 / NCIMB 11848 / C-107).